The primary structure comprises 381 residues: 8-amino-7-oxononanoate synthase (381 aa).

Arg-27 lines the substrate pocket. Pyridoxal 5'-phosphate is bound at residue 105–106 (GY). His-130 is a substrate binding site. Residues Ser-176, 201–204 (DEAH), and 232–235 (TLSK) contribute to the pyridoxal 5'-phosphate site. The residue at position 235 (Lys-235) is an N6-(pyridoxal phosphate)lysine. Thr-345 provides a ligand contact to substrate.

It belongs to the class-II pyridoxal-phosphate-dependent aminotransferase family. BioF subfamily. Homodimer. Pyridoxal 5'-phosphate serves as cofactor.

The enzyme catalyses 6-carboxyhexanoyl-[ACP] + L-alanine + H(+) = (8S)-8-amino-7-oxononanoate + holo-[ACP] + CO2. It participates in cofactor biosynthesis; biotin biosynthesis. Catalyzes the decarboxylative condensation of pimeloyl-[acyl-carrier protein] and L-alanine to produce 8-amino-7-oxononanoate (AON), [acyl-carrier protein], and carbon dioxide. In Mycolicibacterium paratuberculosis (strain ATCC BAA-968 / K-10) (Mycobacterium paratuberculosis), this protein is 8-amino-7-oxononanoate synthase.